The chain runs to 445 residues: Exodeoxyribonuclease 7 large subunit (445 aa).

It belongs to the XseA family. Heterooligomer composed of large and small subunits.

The protein localises to the cytoplasm. The catalysed reaction is Exonucleolytic cleavage in either 5'- to 3'- or 3'- to 5'-direction to yield nucleoside 5'-phosphates.. Bidirectionally degrades single-stranded DNA into large acid-insoluble oligonucleotides, which are then degraded further into small acid-soluble oligonucleotides. The chain is Exodeoxyribonuclease 7 large subunit from Staphylococcus aureus (strain JH1).